Consider the following 388-residue polypeptide: UDP-N-acetylglucosamine--N-acetylmuramyl-(pentapeptide) pyrophosphoryl-undecaprenol N-acetylglucosamine transferase (388 aa).

UDP-N-acetyl-alpha-D-glucosamine contacts are provided by residues 15–17, N125, R168, S196, and Q297; that span reads TGG.

Belongs to the glycosyltransferase 28 family. MurG subfamily.

Its subcellular location is the cell inner membrane. It catalyses the reaction di-trans,octa-cis-undecaprenyl diphospho-N-acetyl-alpha-D-muramoyl-L-alanyl-D-glutamyl-meso-2,6-diaminopimeloyl-D-alanyl-D-alanine + UDP-N-acetyl-alpha-D-glucosamine = di-trans,octa-cis-undecaprenyl diphospho-[N-acetyl-alpha-D-glucosaminyl-(1-&gt;4)]-N-acetyl-alpha-D-muramoyl-L-alanyl-D-glutamyl-meso-2,6-diaminopimeloyl-D-alanyl-D-alanine + UDP + H(+). It participates in cell wall biogenesis; peptidoglycan biosynthesis. Functionally, cell wall formation. Catalyzes the transfer of a GlcNAc subunit on undecaprenyl-pyrophosphoryl-MurNAc-pentapeptide (lipid intermediate I) to form undecaprenyl-pyrophosphoryl-MurNAc-(pentapeptide)GlcNAc (lipid intermediate II). In Novosphingobium aromaticivorans (strain ATCC 700278 / DSM 12444 / CCUG 56034 / CIP 105152 / NBRC 16084 / F199), this protein is UDP-N-acetylglucosamine--N-acetylmuramyl-(pentapeptide) pyrophosphoryl-undecaprenol N-acetylglucosamine transferase.